A 122-amino-acid polypeptide reads, in one-letter code: Alkene monooxygenase system, ferredoxin component (122 aa).

The region spanning 16–111 (VDVCAVDDLW…LKVEGGRVLI (96 aa)) is the Rieske domain. [2Fe-2S] cluster-binding residues include Cys-55, His-57, Cys-75, and His-78.

It belongs to the bacterial ring-hydroxylating dioxygenase ferredoxin component family. As to quaternary structure, homodimer. The alkene monooxygenase multicomponent enzyme system is composed of an electron transfer component and a monooxygenase component interacting with the effector protein XamoD. The electron transfer component is composed of a ferredoxin reductase (XamoF) and a ferredoxin (XamoC), and the monooxygenase component is formed by a heterohexamer (dimer of heterotrimers) of two alpha subunits (XamoA), two beta subunits (XamoE) and two gamma subunits (XamoB). Requires [2Fe-2S] cluster as cofactor.

The protein resides in the cytoplasm. In terms of biological role, ferredoxin component of the alkene monooxygenase multicomponent enzyme system which catalyzes the O2- and NADH-dependent epoxidation of short chain (C2 to C6) alkenes to their corresponding epoxides. Functions as an intermediate electron transfer protein. The sequence is that of Alkene monooxygenase system, ferredoxin component from Xanthobacter autotrophicus (strain ATCC BAA-1158 / Py2).